Reading from the N-terminus, the 292-residue chain is Phosphatidylserine decarboxylase proenzyme (292 aa).

Residues Asp-98, His-153, and Ser-254 each act as charge relay system; for autoendoproteolytic cleavage activity in the active site. Ser-254 serves as the catalytic Schiff-base intermediate with substrate; via pyruvic acid; for decarboxylase activity. Ser-254 is modified (pyruvic acid (Ser); by autocatalysis).

The protein belongs to the phosphatidylserine decarboxylase family. PSD-B subfamily. Prokaryotic type I sub-subfamily. In terms of assembly, heterodimer of a large membrane-associated beta subunit and a small pyruvoyl-containing alpha subunit. The cofactor is pyruvate. Post-translationally, is synthesized initially as an inactive proenzyme. Formation of the active enzyme involves a self-maturation process in which the active site pyruvoyl group is generated from an internal serine residue via an autocatalytic post-translational modification. Two non-identical subunits are generated from the proenzyme in this reaction, and the pyruvate is formed at the N-terminus of the alpha chain, which is derived from the carboxyl end of the proenzyme. The autoendoproteolytic cleavage occurs by a canonical serine protease mechanism, in which the side chain hydroxyl group of the serine supplies its oxygen atom to form the C-terminus of the beta chain, while the remainder of the serine residue undergoes an oxidative deamination to produce ammonia and the pyruvoyl prosthetic group on the alpha chain. During this reaction, the Ser that is part of the protease active site of the proenzyme becomes the pyruvoyl prosthetic group, which constitutes an essential element of the active site of the mature decarboxylase.

It is found in the cell membrane. It carries out the reaction a 1,2-diacyl-sn-glycero-3-phospho-L-serine + H(+) = a 1,2-diacyl-sn-glycero-3-phosphoethanolamine + CO2. Its pathway is phospholipid metabolism; phosphatidylethanolamine biosynthesis; phosphatidylethanolamine from CDP-diacylglycerol: step 2/2. Functionally, catalyzes the formation of phosphatidylethanolamine (PtdEtn) from phosphatidylserine (PtdSer). The polypeptide is Phosphatidylserine decarboxylase proenzyme (Halorhodospira halophila (strain DSM 244 / SL1) (Ectothiorhodospira halophila (strain DSM 244 / SL1))).